The primary structure comprises 368 residues: 3-dehydroquinate synthase (368 aa).

NAD(+) is bound by residues 112–116 (GVVGD), 136–137 (TT), K149, K158, and 176–179 (FLDT). E191, H257, and H274 together coordinate Zn(2+).

This sequence belongs to the sugar phosphate cyclases superfamily. Dehydroquinate synthase family. Requires Co(2+) as cofactor. Zn(2+) is required as a cofactor. The cofactor is NAD(+).

It localises to the cytoplasm. The catalysed reaction is 7-phospho-2-dehydro-3-deoxy-D-arabino-heptonate = 3-dehydroquinate + phosphate. It functions in the pathway metabolic intermediate biosynthesis; chorismate biosynthesis; chorismate from D-erythrose 4-phosphate and phosphoenolpyruvate: step 2/7. Its function is as follows. Catalyzes the conversion of 3-deoxy-D-arabino-heptulosonate 7-phosphate (DAHP) to dehydroquinate (DHQ). The protein is 3-dehydroquinate synthase of Natranaerobius thermophilus (strain ATCC BAA-1301 / DSM 18059 / JW/NM-WN-LF).